A 154-amino-acid chain; its full sequence is 6,7-dimethyl-8-ribityllumazine synthase (154 aa).

Residues Trp-22, 56–58, and 80–82 contribute to the 5-amino-6-(D-ribitylamino)uracil site; these read AWE and CVI. (2S)-2-hydroxy-3-oxobutyl phosphate is bound at residue 85–86; it reads DT. The Proton donor role is filled by His-88. 5-amino-6-(D-ribitylamino)uracil is bound at residue Asn-113. Position 127 (Arg-127) interacts with (2S)-2-hydroxy-3-oxobutyl phosphate.

The protein belongs to the DMRL synthase family. As to quaternary structure, forms an icosahedral capsid composed of 60 subunits, arranged as a dodecamer of pentamers.

The catalysed reaction is (2S)-2-hydroxy-3-oxobutyl phosphate + 5-amino-6-(D-ribitylamino)uracil = 6,7-dimethyl-8-(1-D-ribityl)lumazine + phosphate + 2 H2O + H(+). It functions in the pathway cofactor biosynthesis; riboflavin biosynthesis; riboflavin from 2-hydroxy-3-oxobutyl phosphate and 5-amino-6-(D-ribitylamino)uracil: step 1/2. Functionally, catalyzes the formation of 6,7-dimethyl-8-ribityllumazine by condensation of 5-amino-6-(D-ribitylamino)uracil with 3,4-dihydroxy-2-butanone 4-phosphate. This is the penultimate step in the biosynthesis of riboflavin. The sequence is that of 6,7-dimethyl-8-ribityllumazine synthase from Xanthomonas oryzae pv. oryzae (strain MAFF 311018).